A 155-amino-acid polypeptide reads, in one-letter code: Peptide methionine sulfoxide reductase MsrB (155 aa).

The MsrB domain maps to 15-137 (REALIATLNA…NSVSLTFIPT (123 aa)). Zn(2+)-binding residues include Cys54, Cys57, Cys103, and Cys106. Cys126 functions as the Nucleophile in the catalytic mechanism.

It belongs to the MsrB Met sulfoxide reductase family. It depends on Zn(2+) as a cofactor.

It catalyses the reaction L-methionyl-[protein] + [thioredoxin]-disulfide + H2O = L-methionyl-(R)-S-oxide-[protein] + [thioredoxin]-dithiol. In Xylella fastidiosa (strain M23), this protein is Peptide methionine sulfoxide reductase MsrB.